Reading from the N-terminus, the 231-residue chain is Adenylate kinase (231 aa).

An ATP-binding site is contributed by 12–17 (GAGKGT). The NMP stretch occupies residues 32–61 (STGDMLRAAVKAKTPLGLEVKKIMESGGLV). Residues threonine 33, arginine 38, 59 to 61 (GLV), 87 to 90 (GFPR), and glutamine 94 each bind AMP. The segment at 124-161 (GRLIHPASGRTYHRRYNPPKVADKDDVTGEPLIQRADD) is LID. ATP is bound by residues arginine 125 and 134 to 135 (TY). Residues arginine 158 and arginine 169 each coordinate AMP. Position 205 (glycine 205) interacts with ATP.

Belongs to the adenylate kinase family. As to quaternary structure, monomer.

Its subcellular location is the cytoplasm. It carries out the reaction AMP + ATP = 2 ADP. Its pathway is purine metabolism; AMP biosynthesis via salvage pathway; AMP from ADP: step 1/1. Catalyzes the reversible transfer of the terminal phosphate group between ATP and AMP. Plays an important role in cellular energy homeostasis and in adenine nucleotide metabolism. This Coxiella burnetii (strain CbuK_Q154) (Coxiella burnetii (strain Q154)) protein is Adenylate kinase.